A 242-amino-acid chain; its full sequence is Myogenic factor 6 (242 aa).

The tract at residues 31 to 63 is disordered; the sequence is SPLYPGSDGTLSPCQDQMPQEAGSDSSGEEHVL. The segment covering 39-56 has biased composition (polar residues); sequence GTLSPCQDQMPQEAGSDS. The bHLH domain occupies 93 to 144; the sequence is DRRKAATLRERRRLKKINEAFEALKRRTVANPNQRLPKVEILRSAISYIERL.

Efficient DNA binding requires dimerization with another bHLH protein. Interacts with CSRP3. As to expression, skeletal muscle.

The protein localises to the nucleus. In terms of biological role, involved in muscle differentiation (myogenic factor). Induces fibroblasts to differentiate into myoblasts. Probable sequence specific DNA-binding protein. The chain is Myogenic factor 6 (Myf6) from Mus musculus (Mouse).